We begin with the raw amino-acid sequence, 185 residues long: Avirulence protein ATR39-1 (185 aa).

An N-terminal signal peptide occupies residues 1 to 20 (MVKCTPLLALTVIVSAGSDA). The short motif at 49-66 (RVLRASDVPDEVAAGESR) is the RxLR-dEER element.

The protein belongs to the RxLR effector family.

Its subcellular location is the secreted. The protein resides in the host cell. In terms of biological role, secreted effector that acts as an elicitor of hypersensitive response (HR) specifically on plants carrying defense protein RPP39. The allele ATR39-1 is recognized by RPP39, whereas the ATR39-2 allele is not recognized. This is Avirulence protein ATR39-1 from Hyaloperonospora arabidopsidis (strain Emoy2) (Downy mildew agent).